The chain runs to 527 residues: Peptidoglycan O-acetyltransferase (527 aa).

The next 11 membrane-spanning stretches (helical) occupy residues 11–31 (VFVL…VGFL), 55–75 (LFFY…SIVF), 96–116 (LILG…TDFF), 131–151 (LHLI…AYLM), 187–207 (HFLD…GPIV), 228–248 (NIAL…VIAD), 280–300 (LYFD…FFNI), 352–372 (LILV…FIIW), 397–417 (MPKI…WVFF), 463–483 (IMYA…SFCL), and 505–525 (LLLS…FLYF). H363 is an active-site residue.

It belongs to the membrane-bound acyltransferase family.

It localises to the cell membrane. Functionally, catalyzes the O-acetylation of peptidoglycan (PG), an important mechanism that appears to confer lysozyme resistance and contributes to pathogen persistence in the host. The protein is Peptidoglycan O-acetyltransferase (patA) of Helicobacter pylori (strain ATCC 700392 / 26695) (Campylobacter pylori).